A 298-amino-acid chain; its full sequence is Ribosomal RNA processing protein 36 homolog (298 aa).

The interval 1 to 131 (MKPDIIKKRR…SDAPVEMTAM (131 aa)) is disordered. Residues 14–56 (SDDEDEYNEEDEMYEDDNNNYEEDEDDDDDDDEDDEDDDENEE) show a composition bias toward acidic residues. Composition is skewed to polar residues over residues 61–70 (QQLSNVSFSS) and 83–92 (LNLNTITKNL). 2 coiled-coil regions span residues 88–112 (ITKNLQQQKSFKKEEQQEKEEMNSK) and 196–228 (RERDQLYKKIQSKKSQLKTQQLKDQKRETKNKL). The span at 98–111 (FKKEEQQEKEEMNS) shows a compositional bias: basic and acidic residues. A disordered region spans residues 279–298 (ISSKEKTFLPQRRSFDQDEN).

Belongs to the RRP36 family.

The protein localises to the nucleus. The protein resides in the nucleolus. Functionally, involved in the early processing steps of the pre-rRNA in the maturation pathway leading to the 18S rRNA. The chain is Ribosomal RNA processing protein 36 homolog from Dictyostelium discoideum (Social amoeba).